Consider the following 152-residue polypeptide: Large ribosomal subunit protein uL13 (152 aa).

The tract at residues 130 to 152 is disordered; it reads HPHEAQSPEVLDLASKNPKNTRS.

Belongs to the universal ribosomal protein uL13 family. As to quaternary structure, part of the 50S ribosomal subunit.

Its function is as follows. This protein is one of the early assembly proteins of the 50S ribosomal subunit, although it is not seen to bind rRNA by itself. It is important during the early stages of 50S assembly. This is Large ribosomal subunit protein uL13 from Dinoroseobacter shibae (strain DSM 16493 / NCIMB 14021 / DFL 12).